The following is a 309-amino-acid chain: MCASVTESLPKFPELKTRDLQGQQGPIRSLGWNLSGSRLASSSSSGSVLVWNSDRLDFKFTTELGNRGYGLVEQLVWDPTHSDRLMAVYAGKMIRFWDFRSAKPIAEIESNYENIYATWSPSGNYCCASSRDDMLSFIDARERRIMETFQQPCETNECCWSFSEDLFFMTTGLGTVQIMEWPSLKRVYDIKAHNSNCFCIEFSPDNRHLAIGGADAITSLWDPQELICERSITRMDYPIRTLSFSYDSRYLASGSEDRYVDIADTKTGDQIWKIPTNGPLNKVAWHPTKHILAYAVSEPNSSGLKIFGL.

WD repeat units follow at residues 22 to 61, 65 to 107, 109 to 148, 192 to 231, 234 to 273, and 275 to 309; these read GQQG…FKFT, GNRG…PIAE, ESNY…IMET, AHNS…CERS, RMDY…QIWK, and PTNG…IFGL.

It belongs to the THOC3 family. As to quaternary structure, component of the transcription/export (TREX) complex, which is at least is formed of SUB2, TEX1 and YRA1 and the THO complex composed of HPR1, MFT1, THO2 and THP1.

The protein resides in the nucleus. Component of the TREX complex, which operates in coupling transcription elongation to mRNA export. The chain is THO complex subunit Tho3 (THO3) from Schizosaccharomyces pombe (strain 972 / ATCC 24843) (Fission yeast).